The following is a 423-amino-acid chain: tRNA(Ile)-lysidine synthase (423 aa).

43-48 (SSGVDS) contacts ATP.

The protein belongs to the tRNA(Ile)-lysidine synthase family.

Its subcellular location is the cytoplasm. It catalyses the reaction cytidine(34) in tRNA(Ile2) + L-lysine + ATP = lysidine(34) in tRNA(Ile2) + AMP + diphosphate + H(+). Ligates lysine onto the cytidine present at position 34 of the AUA codon-specific tRNA(Ile) that contains the anticodon CAU, in an ATP-dependent manner. Cytidine is converted to lysidine, thus changing the amino acid specificity of the tRNA from methionine to isoleucine. The protein is tRNA(Ile)-lysidine synthase of Helicobacter hepaticus (strain ATCC 51449 / 3B1).